The chain runs to 885 residues: DNA polymerase eta (885 aa).

The region spanning 18–274 (VLLVDMDCFF…LPVGKIKGLG (257 aa)) is the UmuC domain. Residues Asp-22 and Met-23 each contribute to the Mg(2+) site. Mn(2+)-binding residues include Asp-22 and Met-23. Arg-70 contacts a 2'-deoxyribonucleoside 5'-triphosphate. Mg(2+) is bound by residues Asp-125 and Glu-126. Asp-125 and Glu-126 together coordinate Mn(2+). Residue Glu-126 is part of the active site. Disordered regions lie at residues 599-653 (AIEA…DLYV) and 658-677 (VPPT…RKFD). Residues 608–618 (FEEDTEEETEL) show a composition bias toward acidic residues. Over residues 628–649 (EGQSSDAGQEQDPNTLNDSTGN) the composition is skewed to polar residues. Residues 701-737 (DILPTIKCDQCGANIPDEVKSLQTHRDHHFAQELSRT) form a UBZ3-type 1 zinc finger. Zn(2+)-binding residues include Cys-708, Cys-711, His-725, and His-729. The disordered stretch occupies residues 722 to 783 (LQTHRDHHFA…YSTAPPSNSI (62 aa)). Residues 739-748 (RSTEREERTQ) are compositionally biased toward basic and acidic residues. Residues 766–780 (TAGSGSSSYSTAPPS) show a composition bias toward low complexity. The UBZ3-type 2 zinc-finger motif lies at 798 to 832 (SDPQMNQCPECKAFIKCVDMPEHLDYHVARNLQRE). 4 residues coordinate Zn(2+): Cys-805, Cys-808, His-820, and His-824. Positions 846-870 (NKEKISPVQPKKQSQKKLNSTISAS) are disordered.

The protein belongs to the DNA polymerase type-Y family. Interacts (via C-terminus) with nopo. Requires Mg(2+) as cofactor. Mn(2+) serves as cofactor. Post-translationally, ubiquitination enhanced by nopo. Expressed in ovaries and testes.

It localises to the nucleus. The catalysed reaction is DNA(n) + a 2'-deoxyribonucleoside 5'-triphosphate = DNA(n+1) + diphosphate. The enzyme in complex with the DNA substrate binds a third divalent metal cation. This binding is essential for catalyzing the DNA synthesis. DNA polymerase specifically involved in the DNA repair by translesion synthesis (TLS). Plays an important role in translesion synthesis, where the normal high-fidelity DNA polymerases cannot proceed and DNA synthesis stalls. Inserts one or 2 nucleotide(s) opposite the lesion. During homologous recombination (HR) repair, has a overlapping role with the error-prone translesion polymerase PolZ1/DNApol-zeta to initiate repair synthesis that is completed by end joining or another polymerase that can bind and reinitiate synthesis. Particularly important for the repair of UV-induced pyrimidine dimers and for hydroxyurea (HU)-induced DNA damage. Although inserts the correct base, may cause base transitions and transversions depending upon the context. Forms a Schiff base with 5'-deoxyribose phosphate at abasic sites, but does not have any lyase activity, preventing the release of the 5'-deoxyribose phosphate (5'-dRP) residue. This covalent trapping of the enzyme by the 5'-dRP residue inhibits its DNA synthetic activity during base excision repair, thereby avoiding high incidence of mutagenesis. The sequence is that of DNA polymerase eta from Drosophila melanogaster (Fruit fly).